A 221-amino-acid chain; its full sequence is GIVVYQSPGDIGQYTHEFDGDEWFYVDLDKKETVWMLPEFGQLTSFDPQGGLQNIATGKHNLGGWTKRSNFTPATNEAPQATVFPKSPVLLGQPNTLICFVDNIFPPVINITWLRNSKSVTDGVYETSFLVNRDHSFHKLSYLTFIPSDDDIYDCKVEHWGLDEPVLKHWEPEIPAPMSELTETVVCALGLSVGLVGIVVGTIFIIQGLRSGGTSRPPGPL.

The alpha-1 stretch occupies residues 1-76 (GIVVYQSPGD…KRSNFTPATN (76 aa)). At 1–183 (GIVVYQSPGD…IPAPMSELTE (183 aa)) the chain is on the extracellular side. Residues 77–170 (EAPQATVFPK…GLDEPVLKHW (94 aa)) form an alpha-2 region. The region spanning 79–171 (PQATVFPKSP…LDEPVLKHWE (93 aa)) is the Ig-like C1-type domain. Residues Cys99 and Cys155 are joined by a disulfide bond. N-linked (GlcNAc...) asparagine glycosylation occurs at Asn110. A connecting peptide region spans residues 171 to 183 (EPEIPAPMSELTE). A helical membrane pass occupies residues 184–209 (TVVCALGLSVGLVGIVVGTIFIIQGL). The Cytoplasmic portion of the chain corresponds to 210–221 (RSGGTSRPPGPL).

This sequence belongs to the MHC class II family.

It localises to the membrane. The chain is H-2 class II histocompatibility antigen, A-Q alpha chain (H2-Aa) from Mus musculus (Mouse).